Reading from the N-terminus, the 165-residue chain is UPF0669 protein v1g209471 (165 aa).

An N-terminal signal peptide occupies residues 1–23; it reads MQGRYSAPLFLLLWLFFLHGTLC. The N-linked (GlcNAc...) asparagine glycan is linked to Asn-38.

It belongs to the UPF0669 family.

The protein localises to the secreted. In Nematostella vectensis (Starlet sea anemone), this protein is UPF0669 protein v1g209471.